The following is a 592-amino-acid chain: A-type ATP synthase subunit A (592 aa).

233–240 provides a ligand contact to ATP; it reads GPFGSGKT.

It belongs to the ATPase alpha/beta chains family. As to quaternary structure, has multiple subunits with at least A(3), B(3), C, D, E, F, H, I and proteolipid K(x).

It is found in the cell membrane. It carries out the reaction ATP + H2O + 4 H(+)(in) = ADP + phosphate + 5 H(+)(out). In terms of biological role, component of the A-type ATP synthase that produces ATP from ADP in the presence of a proton gradient across the membrane. The A chain is the catalytic subunit. The chain is A-type ATP synthase subunit A from Saccharolobus islandicus (strain Y.G.57.14 / Yellowstone #1) (Sulfolobus islandicus).